A 395-amino-acid chain; its full sequence is NAC domain-containing protein 7 (395 aa).

In terms of domain architecture, NAC spans 7–156 (VPPGFRFHPT…GWVVCRVFKK (150 aa)). The DNA-binding element occupies 107–162 (IGMRKTLVFYKGRAPNGQKSDWIMHEYRLETDENGTPQEEGWVVCRVFKKRLAAVR). Polar residues-rich tracts occupy residues 344–362 (AATA…SNAE) and 382–395 (TAST…DLWK). The disordered stretch occupies residues 344-395 (AATASASIQNNAKDTSNAEYQVDEEKDPKRASDMGEEYTASTSSSCQIDLWK).

This sequence belongs to the plant vascular related NAC-domain protein family. As to quaternary structure, interacts with NAC083/VNI2. In terms of tissue distribution, expressed in root, shoot and hypocotyl vascular elements, columella root caps, epidermal and cortex root cells and root-hypocotyl junctions. Observed predominantly in root imature xylem vessels. Present in root developing xylems. Specifically expressed in vessels in the secondary xylem of the root-hypocotyl region, and in vessels but not in interfascicular fibers in stems.

It is found in the nucleus. Its function is as follows. Transcription activator that binds to the secondary wall NAC binding element (SNBE), 5'-(T/A)NN(C/T)(T/C/G)TNNNNNNNA(A/C)GN(A/C/T)(A/T)-3', in the promoter of target genes. Involved in xylem formation by promoting the expression of secondary wall-associated transcription factors and of genes involved in secondary wall biosynthesis and programmed cell death, genes driven by the secondary wall NAC binding element (SNBE). Triggers thickening of secondary walls. The protein is NAC domain-containing protein 7 of Arabidopsis thaliana (Mouse-ear cress).